We begin with the raw amino-acid sequence, 371 residues long: Putative RNA-binding protein Luc7-like 1 (371 aa).

Coiled-coil stretches lie at residues 87 to 177 and 220 to 256; these read MDHL…RNSM and QIRE…EERL. Over residues 232 to 257 the composition is skewed to basic and acidic residues; the sequence is VAEKQEKRNQDRLRRREEREREERLG. Positions 232 to 371 are disordered; the sequence is VAEKQEKRNQ…RSEEKEAGEI (140 aa). Residues 258 to 317 are compositionally biased toward basic residues; the sequence is RRSGSRTRDRRRSRSRDRRRRRSRSTSRERRKFSRSRSRDRYRRHRSRSRSHSRGHRRAS. 2 stretches are compositionally biased toward basic and acidic residues: residues 318-351 and 361-371; these read RDRS…DWRL and RRSEEKEAGEI. Residues Ser336 and Ser363 each carry the phosphoserine modification.

It belongs to the Luc7 family.

May bind to RNA via its Arg/Ser-rich domain. In Mus musculus (Mouse), this protein is Putative RNA-binding protein Luc7-like 1 (Luc7l).